The following is a 154-amino-acid chain: NADPH-dependent 7-cyano-7-deazaguanine reductase (154 aa).

Residues 1-24 (MPKTDVSGLSQLGTKVDLPQSPEE) form a disordered region. The active-site Thioimide intermediate is Cys52. The Proton donor role is filled by Asp59. Residues 74–76 (VES) and 93–94 (HE) contribute to the substrate site.

Belongs to the GTP cyclohydrolase I family. QueF type 1 subfamily.

It localises to the cytoplasm. The enzyme catalyses 7-aminomethyl-7-carbaguanine + 2 NADP(+) = 7-cyano-7-deazaguanine + 2 NADPH + 3 H(+). It functions in the pathway tRNA modification; tRNA-queuosine biosynthesis. In terms of biological role, catalyzes the NADPH-dependent reduction of 7-cyano-7-deazaguanine (preQ0) to 7-aminomethyl-7-deazaguanine (preQ1). This is NADPH-dependent 7-cyano-7-deazaguanine reductase from Sinorhizobium fredii (strain NBRC 101917 / NGR234).